The chain runs to 562 residues: MNINVANLLNGNYILLLFVVLALGLCLGKLRLGPIQLGNAIGVLVVSLLLGQQHFTINTEALNLGFMLFIFCVGVEAGPNFFSIFFRDGKNYLMLALVMVGSAMVLALGLGKLFGWDIGLTAGMLAGSMTSTPVLVGAGDTLRHTIANNPALQHAQDNLSLGYALTYLIGLVSLILGARYLPKLQHQDLPTSAQQIARERGLDTDSQRKVYLPVIRAYRVGPELVAWADGKNLRELGIYRQTGCYIERIRRNGILANPDGDAVLQVGDEISLVGYPDAHSRLDPSFRNGKEVFDRDLLDMRIVTEEIVVKNSNAVGKRLSHLKLTDHGCFLNRVIRSQIEMPIDDNVVLNKGDVLQVSGDARRVKSVAEKIGFISIHSQVTDLLAFCAFFILGLMIGLITFQFSNFSFGIGNAAGLLMAGIMLGFLRANHPTFGYIPQGALNMVKEFGLMVFMAGVGLSAGGGINSSLGAVGGQMLISGLIVSLVPVVICFIFGAYVLRMNRALLFGAIMGARTCAPAMDIISDTARSNIPALGYAGTYAIANVLLTLAGSLIVIVWPGILG.

Transmembrane regions (helical) follow at residues 8–28 (LLNG…LCLG), 32–52 (LGPI…LLGQ), 66–86 (FMLF…SIFF), 94–114 (MLAL…GKLF), 118–138 (IGLT…LVGA), and 158–178 (NLSL…ILGA). RCK C-terminal domains follow at residues 202–288 (LDTD…SFRN) and 290–373 (KEVF…KIGF). 5 helical membrane passes run 383 to 403 (LLAF…TFQF), 406 to 426 (FSFG…LGFL), 447 to 467 (FGLM…INSS), 475 to 495 (MLIS…IFGA), and 541 to 561 (IANV…PGIL).

Belongs to the AAE transporter (TC 2.A.81) family. YbjL subfamily.

The protein resides in the cell membrane. The sequence is that of Putative transport protein YE1478 from Yersinia enterocolitica serotype O:8 / biotype 1B (strain NCTC 13174 / 8081).